Consider the following 337-residue polypeptide: Inositol 2-dehydrogenase 1 (337 aa).

This sequence belongs to the Gfo/Idh/MocA family. As to quaternary structure, homotetramer.

The enzyme catalyses myo-inositol + NAD(+) = scyllo-inosose + NADH + H(+). Involved in the oxidation of myo-inositol (MI) to 2-keto-myo-inositol (2KMI or 2-inosose). This chain is Inositol 2-dehydrogenase 1, found in Saccharopolyspora erythraea (strain ATCC 11635 / DSM 40517 / JCM 4748 / NBRC 13426 / NCIMB 8594 / NRRL 2338).